A 447-amino-acid polypeptide reads, in one-letter code: Chaperone protein dnaJ A7B, chloroplastic (447 aa).

The N-terminal 86 residues, 1–86, are a transit peptide targeting the chloroplast; that stretch reads MALLQFGGTL…HRRSSRFIVR (86 aa). The region spanning 90-154 is the J domain; that stretch reads DFYSTLGVSR…EKRSIYDKYG (65 aa). Residues 217 to 298 form a CR-type zinc finger; that stretch reads GVEKEIEITR…CGGDGRVRKT (82 aa). Positions 230, 233, 247, 250, 273, 276, 286, and 289 each coordinate Zn(2+). CXXCXGXG motif repeat units follow at residues 230–237, 247–254, 273–280, and 286–293; these read CNTCDGTG, CKTCGGQG, CNTCGGTG, and CNTCGGDG.

The protein belongs to the DnaJ family. In terms of assembly, interacts with PCNA. In terms of tissue distribution, expressed in roots, stems, leaves and panicles.

Its subcellular location is the plastid. It is found in the chloroplast. In terms of biological role, plays pivotal roles in chloroplast development. Is essential for the regulation of chloroplast development and differentiation. The sequence is that of Chaperone protein dnaJ A7B, chloroplastic from Oryza sativa subsp. japonica (Rice).